The sequence spans 417 residues: NADH-dependent phenylglyoxylate dehydrogenase subunit alpha (417 aa).

As to quaternary structure, dimer of heteropentamers composed of an alpha (PadG), a beta (PadI), a gamma (PadE), a delta (PadF) and an epsilon (PadH) subunit.

It catalyses the reaction phenylglyoxylate + NAD(+) + CoA = benzoyl-CoA + CO2 + NADH. Its activity is regulated as follows. Activated by magnesium ions and thiamine diphosphate. In terms of biological role, involved in the anaerobic metabolism of phenylalanine and phenylacetate. Catalyzes the oxidative decarboxylation of phenylglyoxylate to benzoyl-CoA and CO(2). It can also react slowly with 2-oxo-3-methylbutanoate and use different electron acceptors such as benzyl viologen, methyl viologen, FAD or FMN, but NAD seems to be the physiological electron acceptor. Also catalyzes an isotope exchange between CO(2) and the carboxyl group which proves partial or complete reversibility of the oxidative decarboxylation reaction. The polypeptide is NADH-dependent phenylglyoxylate dehydrogenase subunit alpha (padG) (Aromatoleum evansii (Azoarcus evansii)).